Reading from the N-terminus, the 74-residue chain is Small ribosomal subunit protein bS18 (74 aa).

Belongs to the bacterial ribosomal protein bS18 family. Part of the 30S ribosomal subunit. Forms a tight heterodimer with protein bS6.

Functionally, binds as a heterodimer with protein bS6 to the central domain of the 16S rRNA, where it helps stabilize the platform of the 30S subunit. The sequence is that of Small ribosomal subunit protein bS18 from Zymomonas mobilis subsp. mobilis (strain ATCC 31821 / ZM4 / CP4).